A 514-amino-acid polypeptide reads, in one-letter code: MLIDEAAEASSHISGMKLYLIVLSLLLAVFCVALDNTILSVAIPRITDEFHRLNDIGWYASAYLLTTCAFQLLYGKLYALFSTKWVFLVALCIFEVGSLICGVAPSSVVLIVGRAIAGVGSSGIFTGALVTIAHIVPLAKRPVYMGLLGGMYGIASVAGPLLGGAFTNEVTWRWCFYINLPVGGVTAVVILFLLRIPKSADLRTHGAWEMLKGLDPLGTIVFTPSIICVLLALQWGGVDYAWSNGRIIALFVLFGVLLITFIIIQVLMKDKATVPIKVASQRSVACASVFVFFIGASMFVMIYYVPIWFQAIRNQSPVQAGIDSIALILANTAGAIISGAVTNKTGHYAPWFIVSSVIMSIGAGCLTLFTVDIAQSKWIGFLFLYGIGVGFGFQQGAVAVQAVLPMAQVPIGTALIWFVQMLGGALFTSVAQNIFSTHLAENLANLQLPGLDPEAIVGAGATGFRQLVQPEYMDQVLVAYNAALLDVFQVALICSCLSILGAVGIEWRSVKQNR.

10 consecutive transmembrane segments (helical) span residues 13–33 (ISGM…FCVA), 61–81 (SAYL…YALF), 85–105 (WVFL…GVAP), 116–136 (IAGV…AHIV), 146–166 (GLLG…GGAF), 174–194 (WCFY…LFLL), 218–238 (GTIV…WGGV), 247–267 (IIAL…IQVL), 289–309 (VFVF…PIWF), and 321–341 (GIDS…SGAV). A glycan (N-linked (GlcNAc...) asparagine) is linked at Asn343. Transmembrane regions (helical) follow at residues 351 to 371 (WFIV…LFTV), 378 to 398 (WIGF…QGAV), 411 to 431 (IGTA…TSVA), and 485 to 505 (LDVF…AVGI).

This sequence belongs to the major facilitator superfamily. TCR/Tet family.

The protein resides in the cell membrane. In terms of biological role, efflux pump; part of the gene cluster that mediates the biosynthesis of aflatoxins. The chain is Efflux pump aflT from Aspergillus parasiticus (strain ATCC 56775 / NRRL 5862 / SRRC 143 / SU-1).